We begin with the raw amino-acid sequence, 491 residues long: mRNA cleavage and polyadenylation factor clp1 (491 aa).

Glutamate 28 and lysine 78 together coordinate ATP. The tract at residues 128–160 (RAAAAQAQQQHPTHHQQQQQGRGAGAGVARSKP) is disordered. Residues 130–148 (AAAQAQQQHPTHHQQQQQG) show a composition bias toward low complexity. ATP is bound at residue 171–176 (GVGKTS).

This sequence belongs to the Clp1 family. Clp1 subfamily. Component of a pre-mRNA cleavage factor complex. Interacts directly with PCF11.

It localises to the nucleus. Functionally, required for endonucleolytic cleavage during polyadenylation-dependent pre-mRNA 3'-end formation. This Neurospora crassa (strain ATCC 24698 / 74-OR23-1A / CBS 708.71 / DSM 1257 / FGSC 987) protein is mRNA cleavage and polyadenylation factor clp1 (paa-7).